The sequence spans 261 residues: Kallikrein 1-related peptidase b9 (261 aa).

An N-terminal signal peptide occupies residues 1–18 (MRFLILFLALSLGGIDAA). The propeptide at 19 to 24 (PPVHSR) is activation peptide. Residues 25 to 258 (IVGGFKCEKN…FTSWIKDTMA (234 aa)) form the Peptidase S1 domain. 5 disulfide bridges follow: cysteine 31-cysteine 173, cysteine 50-cysteine 66, cysteine 152-cysteine 219, cysteine 184-cysteine 198, and cysteine 209-cysteine 234. Histidine 65 functions as the Charge relay system in the catalytic mechanism. Asparagine 102 carries an N-linked (GlcNAc...) asparagine glycan. Aspartate 120 serves as the catalytic Charge relay system. The active-site Charge relay system is the serine 213.

Belongs to the peptidase S1 family. Kallikrein subfamily.

It catalyses the reaction Preferential cleavage of Arg-|-Xaa bonds in small molecule substrates. Highly selective action to release kallidin (lysyl-bradykinin) from kininogen involves hydrolysis of Met-|-Xaa or Leu-|-Xaa.. In terms of biological role, glandular kallikreins cleave Met-Lys and Arg-Ser bonds in kininogen to release Lys-bradykinin. The chain is Kallikrein 1-related peptidase b9 (Klk1b9) from Mus musculus (Mouse).